The following is a 149-amino-acid chain: SsrA-binding protein (149 aa).

The disordered stretch occupies residues 121-149; it reads GKKQHDKRAAEKDREWQREKQRLVRSAQH. Basic and acidic residues predominate over residues 127-142; sequence KRAAEKDREWQREKQR.

Belongs to the SmpB family.

The protein localises to the cytoplasm. Functionally, required for rescue of stalled ribosomes mediated by trans-translation. Binds to transfer-messenger RNA (tmRNA), required for stable association of tmRNA with ribosomes. tmRNA and SmpB together mimic tRNA shape, replacing the anticodon stem-loop with SmpB. tmRNA is encoded by the ssrA gene; the 2 termini fold to resemble tRNA(Ala) and it encodes a 'tag peptide', a short internal open reading frame. During trans-translation Ala-aminoacylated tmRNA acts like a tRNA, entering the A-site of stalled ribosomes, displacing the stalled mRNA. The ribosome then switches to translate the ORF on the tmRNA; the nascent peptide is terminated with the 'tag peptide' encoded by the tmRNA and targeted for degradation. The ribosome is freed to recommence translation, which seems to be the essential function of trans-translation. This chain is SsrA-binding protein, found in Thiobacillus denitrificans (strain ATCC 25259 / T1).